A 367-amino-acid polypeptide reads, in one-letter code: UDP-N-acetylglucosamine--N-acetylmuramyl-(pentapeptide) pyrophosphoryl-undecaprenol N-acetylglucosamine transferase (367 aa).

UDP-N-acetyl-alpha-D-glucosamine-binding positions include 21–23 (TGG), N129, R170, S198, and Q295.

This sequence belongs to the glycosyltransferase 28 family. MurG subfamily.

The protein localises to the cell inner membrane. The enzyme catalyses di-trans,octa-cis-undecaprenyl diphospho-N-acetyl-alpha-D-muramoyl-L-alanyl-D-glutamyl-meso-2,6-diaminopimeloyl-D-alanyl-D-alanine + UDP-N-acetyl-alpha-D-glucosamine = di-trans,octa-cis-undecaprenyl diphospho-[N-acetyl-alpha-D-glucosaminyl-(1-&gt;4)]-N-acetyl-alpha-D-muramoyl-L-alanyl-D-glutamyl-meso-2,6-diaminopimeloyl-D-alanyl-D-alanine + UDP + H(+). It functions in the pathway cell wall biogenesis; peptidoglycan biosynthesis. In terms of biological role, cell wall formation. Catalyzes the transfer of a GlcNAc subunit on undecaprenyl-pyrophosphoryl-MurNAc-pentapeptide (lipid intermediate I) to form undecaprenyl-pyrophosphoryl-MurNAc-(pentapeptide)GlcNAc (lipid intermediate II). The sequence is that of UDP-N-acetylglucosamine--N-acetylmuramyl-(pentapeptide) pyrophosphoryl-undecaprenol N-acetylglucosamine transferase from Synechococcus sp. (strain JA-2-3B'a(2-13)) (Cyanobacteria bacterium Yellowstone B-Prime).